A 145-amino-acid chain; its full sequence is Small ribosomal subunit protein eS19 (145 aa).

Lys-23 bears the N6-acetyllysine mark. Arg-67 carries the omega-N-methylarginine modification. Lys-111 and Lys-115 each carry N6-acetyllysine. Lys-143 carries the N6-succinyllysine modification.

Belongs to the eukaryotic ribosomal protein eS19 family. As to quaternary structure, component of the small ribosomal subunit. Part of the small subunit (SSU) processome, composed of more than 70 proteins and the RNA chaperone small nucleolar RNA (snoRNA) U3. Interacts with RPS19BP1.

It localises to the cytoplasm. The protein resides in the nucleus. Its subcellular location is the nucleolus. In terms of biological role, component of the small ribosomal subunit. The ribosome is a large ribonucleoprotein complex responsible for the synthesis of proteins in the cell. Required for pre-rRNA processing and maturation of 40S ribosomal subunits. Part of the small subunit (SSU) processome, first precursor of the small eukaryotic ribosomal subunit. During the assembly of the SSU processome in the nucleolus, many ribosome biogenesis factors, an RNA chaperone and ribosomal proteins associate with the nascent pre-rRNA and work in concert to generate RNA folding, modifications, rearrangements and cleavage as well as targeted degradation of pre-ribosomal RNA by the RNA exosome. This chain is Small ribosomal subunit protein eS19 (Rps19), found in Rattus norvegicus (Rat).